Here is a 359-residue protein sequence, read N- to C-terminus: Peptide chain release factor 1 (359 aa).

Position 236 is an N5-methylglutamine (Gln236).

It belongs to the prokaryotic/mitochondrial release factor family. Post-translationally, methylated by PrmC. Methylation increases the termination efficiency of RF1.

Its subcellular location is the cytoplasm. Peptide chain release factor 1 directs the termination of translation in response to the peptide chain termination codons UAG and UAA. This is Peptide chain release factor 1 from Streptococcus pneumoniae (strain Taiwan19F-14).